Reading from the N-terminus, the 666-residue chain is MPKIPSKETPRGVAIAEPIIVEHSVDLLMVGGGMGNCGAAFEAVRWADKYAPEAKILLVDKASLERSGAVAQGLSAINTYLGDNNADDYVRMVRTDLMGLVREDLIYDLGRHVDDSVHLFEEWGLPVWIKDEHGHNLDGAQAKAAGKSLRNGDKPVRSGRWQIMINGESYKVIVAEAAKNALGQDRIIERIFIVKLLLDKNTPNRIAGAVGFNLRANEVHIFKANAMVVACGGAVNVYRPRSVGEGMGRAWYPVWNAGSTYTMCAQVGAEMTMMENRFVPARFKDGYGPVGAWFLLFKAKATNCKGEDYCATNRAMLKPYEERGYAKGHVIPTCLRNHMMLREMREGRGPIYMDTKTALQTSFATMSPAQQKHLEAEAWEDFLDMCVGQANLWAATNCAPEERGSEIMPTEPYLLGSHSGCCGIWASGPDEAWVPEDYKVRAANGKVYNRMTTVEGLWTCADGVGASGHKFSSGSHAEGRIVGKQMVRWYLDHKDFKPEFVETAEELKTLIYRPYYNYEKGKGASTCPVVNPEYISPKNFMMRLIKCTDEYGGGVGTYYNTSKALLDTGFWLMEMLEEDSLKLAARDLHELLRCWENYHRLWTVRLHMQHIAFREESRYPGFYYRADFLGLDDSKWKCFVNSKYDPAKKETKIFKKPYYQIIPTDA.

FAD is bound by residues 32 to 35 (GGMG), 60 to 61 (DK), 67 to 69 (SGA), asparagine 78, isoleucine 193, serine 259, serine 417, 461 to 462 (AD), and serine 472.

This sequence belongs to the FAD-dependent oxidoreductase 2 family. In terms of assembly, heterodimer composed of AprA and AprB. The heterodimers can dimerize to form heterotetramers. Requires FAD as cofactor.

The protein resides in the cytoplasm. The enzyme catalyses sulfite + A + AMP + 2 H(+) = adenosine 5'-phosphosulfate + AH2. In terms of biological role, catalytic subunit of the adenylylsulfate reductase which catalyzes reversibly the reduction of adenosine 5'-phosphosulfate (APS) to sulfite and AMP during dissimilatory sulfate reduction. The polypeptide is Adenylylsulfate reductase subunit alpha (Megalodesulfovibrio gigas (strain ATCC 19364 / DSM 1382 / NCIMB 9332 / VKM B-1759) (Desulfovibrio gigas)).